A 418-amino-acid polypeptide reads, in one-letter code: MLPRKLKIDSTELAEITNELVQFLNCLVLRSGGLKKEHIWVRNGRILDERTVFFEEKTMADVQIDCEGLILSPGFIDLQLNGGFGIDFSTYNSDDKEYQEGLALVAKQLLAHGVTSFSPTVITSSPETYHKILPLLKPSNASSEGAGNLGAHLEGPFISADKRGCHPEQLVITSLSPNPVEIIEHVYGSTENIAIVTMAPELEGAQEAIEYFVSTGTTVSVGHSSAKLGPGEMAVLSGAKMITHLFNAMQSYHHRDPGLIGLLTSSKLTPDHPLYYGIISDGIHTHDSALRIAYHTNSAGLVLVTDAIAALGMSDGVHKLGTQTIHVKGLEAKLDGTNTTAGSVASMPYCIRHLMKATGCPIEFALQSATHKPATLLGVSDEKGTLDVGRLADFVLIDKNVTVKATFCSGKRVFLAQD.

Glutamate 154 is a binding site for a divalent metal cation. A substrate-binding site is contributed by 165–166 (CH). A divalent metal cation contacts are provided by histidine 223 and histidine 244. Residues 247–248 (NA), arginine 255, and 281–284 (DGIH) each bind substrate. The Proton donor/acceptor role is filled by aspartate 306. 340 to 342 (TAG) contacts substrate.

This sequence belongs to the metallo-dependent hydrolases superfamily. NagA family. Requires a divalent metal cation as cofactor.

The enzyme catalyses N-acetyl-D-glucosamine 6-phosphate + H2O = D-glucosamine 6-phosphate + acetate. In Caenorhabditis elegans, this protein is N-acetylglucosamine-6-phosphate deacetylase.